Here is a 335-residue protein sequence, read N- to C-terminus: Pregnancy-specific beta-1-glycoprotein 5 (335 aa).

A signal peptide spans 1–34 (MGPLSAPPCTQHITWKGLLLTASLLNFWNLPITA). One can recognise an Ig-like V-type domain in the interval 35 to 144 (QVTIEALPPK…TGYFTFNLYL (110 aa)). N-linked (GlcNAc...) asparagine glycosylation is found at asparagine 104 and asparagine 111. Residues 127-129 (RGD) carry the Cell attachment site motif. 2 Ig-like C2-type domains span residues 147 to 234 (PKPY…VTLN) and 239 to 317 (PDLP…KSMT). Intrachain disulfides connect cysteine 169–cysteine 217 and cysteine 261–cysteine 301. 2 N-linked (GlcNAc...) asparagine glycosylation sites follow: asparagine 175 and asparagine 210.

The protein belongs to the immunoglobulin superfamily. CEA family. As to expression, synthesized by syncytiotrophoblast of the placenta.

The protein localises to the secreted. The protein is Pregnancy-specific beta-1-glycoprotein 5 (PSG5) of Homo sapiens (Human).